A 124-amino-acid chain; its full sequence is Large ribosomal subunit protein uL18 (124 aa).

Belongs to the universal ribosomal protein uL18 family. In terms of assembly, part of the 50S ribosomal subunit; part of the 5S rRNA/L5/L18/L25 subcomplex. Contacts the 5S and 23S rRNAs.

Functionally, this is one of the proteins that bind and probably mediate the attachment of the 5S RNA into the large ribosomal subunit, where it forms part of the central protuberance. This chain is Large ribosomal subunit protein uL18, found in Aquifex pyrophilus.